Reading from the N-terminus, the 558-residue chain is Potassium-transporting ATPase potassium-binding subunit 2 (558 aa).

Transmembrane regions (helical) follow at residues 1–21, 60–80, 129–149, 169–189, 246–266, 281–301, 326–346, 353–373, 376–396, 415–435, 485–505, and 523–543; these read MSIV…SRYL, IKHF…LLLI, VITF…IAML, FIVR…ISQG, WSNY…VFLF, IMIF…CLYF, FGIG…TGTV, LTPL…VFGG, VGLM…SLMI, IALS…LAFI, IVML…VSSL, and LFFS…TFLP.

Belongs to the KdpA family. In terms of assembly, the system is composed of three essential subunits: KdpA, KdpB and KdpC.

It is found in the cell membrane. Its function is as follows. Part of the high-affinity ATP-driven potassium transport (or Kdp) system, which catalyzes the hydrolysis of ATP coupled with the electrogenic transport of potassium into the cytoplasm. This subunit binds the extracellular potassium ions and delivers the ions to the membrane domain of KdpB through an intramembrane tunnel. This chain is Potassium-transporting ATPase potassium-binding subunit 2, found in Staphylococcus aureus (strain Mu50 / ATCC 700699).